Reading from the N-terminus, the 176-residue chain is Scytalone dehydratase-like protein AacuK (176 aa).

2 residues coordinate substrate: Tyr-26 and Tyr-46. Catalysis depends on residues His-81 and His-107.

It belongs to the scytalone dehydratase family.

The protein operates within secondary metabolite biosynthesis. Scytalone dehydratase-like protein; part of the gene cluster that mediates the biosynthesis of the tetrahydroxanthone dimer secalonic acid D. The pathway begins with the synthesis of atrochrysone thioester by the polyketide synthase AacuL. The atrochrysone carboxyl ACP thioesterase AacuM then breaks the thioester bond and releases the atrochrysone carboxylic acid from AacuL. Atrochrysone carboxylic acid is decarboxylated by the decarboxylase AacuI, and oxidized by the anthrone oxygenase AacuG to yield emodin. Emodin is then reduced to emodin hydroquinone by a yet unidentified oxidoreductase. A-ring reduction by the short chain dehydrogenase AacuN, dehydration by the scytalone dehydratase-like protein AacuK and probable spontaneous re-oxidation, results in overall deoxygenation to chrysophanol. Baeyer-Villiger oxidation by the Baeyer-Villiger monooxygenase (BVMO) AacuH then yields monodictyphenone. Monodictyphenone is transformed into compounds with the tetrahydroxanthone skeleton via methylesterification by the methyltransferase AacuQ, followed by the action of the flavin-dependent monooxygenase AacuC, the isomerase AacuP, and the short chain dehydrogenase/reductase AacuF or AacuD. AacuF and AacuD should accept the same compound as a substrate but perform the ketoreduction with a different stereoselectivity, thus yielding blennolides B and A, respectively. In the final step of the biosynthesis, the cytochrome P450 monooxygenase AacuE accepts blennolide B and/or blennolide A to conduct the dimerization reaction to furnish the tetrahydroxanthone dimers, secalonic acids D, B, and F. This chain is Scytalone dehydratase-like protein AacuK, found in Aspergillus aculeatus (strain ATCC 16872 / CBS 172.66 / WB 5094).